The primary structure comprises 406 residues: 2,3-bisphosphoglycerate-independent phosphoglycerate mutase (406 aa).

A disordered region spans residues 156-183 (NLSDKISDSDPHSEGKPPEPIRPLDPSA). A compositionally biased stretch (basic and acidic residues) spans 160-174 (KISDSDPHSEGKPPE).

The protein belongs to the BPG-independent phosphoglycerate mutase family. A-PGAM subfamily.

The enzyme catalyses (2R)-2-phosphoglycerate = (2R)-3-phosphoglycerate. The protein operates within carbohydrate degradation; glycolysis; pyruvate from D-glyceraldehyde 3-phosphate: step 3/5. In terms of biological role, catalyzes the interconversion of 2-phosphoglycerate and 3-phosphoglycerate. In Thermoplasma volcanium (strain ATCC 51530 / DSM 4299 / JCM 9571 / NBRC 15438 / GSS1), this protein is 2,3-bisphosphoglycerate-independent phosphoglycerate mutase.